Consider the following 423-residue polypeptide: Glutamyl-tRNA reductase (423 aa).

Residues threonine 49–arginine 52, serine 107, glutamate 112–glutamine 114, and glutamine 118 contribute to the substrate site. Catalysis depends on cysteine 50, which acts as the Nucleophile. NADP(+) is bound at residue glycine 187–isoleucine 192.

Belongs to the glutamyl-tRNA reductase family. Homodimer.

It catalyses the reaction (S)-4-amino-5-oxopentanoate + tRNA(Glu) + NADP(+) = L-glutamyl-tRNA(Glu) + NADPH + H(+). The protein operates within porphyrin-containing compound metabolism; protoporphyrin-IX biosynthesis; 5-aminolevulinate from L-glutamyl-tRNA(Glu): step 1/2. Catalyzes the NADPH-dependent reduction of glutamyl-tRNA(Glu) to glutamate 1-semialdehyde (GSA). The chain is Glutamyl-tRNA reductase from Pseudoalteromonas atlantica (strain T6c / ATCC BAA-1087).